We begin with the raw amino-acid sequence, 412 residues long: Nucleoside transporter 1 (412 aa).

Residues Met1–Glu21 are disordered. Over Met1–Ser29 the chain is Cytoplasmic. Over residues Ser7–Glu21 the composition is skewed to polar residues. The helical transmembrane segment at Ile30 to Ala50 threads the bilayer. Over Leu51–Lys56 the chain is Extracellular. Residues Ile57–Val77 form a helical membrane-spanning segment. At Asn78–Arg81 the chain is on the cytoplasmic side. The helical transmembrane segment at Val82–His102 threads the bilayer. Topologically, residues Gln103–Cys114 are extracellular. The chain crosses the membrane as a helical span at residues Leu115–Ile135. Topologically, residues Gly136–Ser144 are cytoplasmic. Residues Gly145–Leu165 traverse the membrane as a helical segment. At Asp166–Lys181 the chain is on the extracellular side. Residues Leu182–Leu202 traverse the membrane as a helical segment. Over Tyr203–Lys240 the chain is Cytoplasmic. The helical transmembrane segment at Ala241–His261 threads the bilayer. Topologically, residues Lys262–Thr271 are extracellular. A helical transmembrane segment spans residues Asp272–Asn294. The Cytoplasmic portion of the chain corresponds to Phe295–Thr310. Residues Leu311–Ile331 form a helical membrane-spanning segment. Topologically, residues Ser332–Cys343 are extracellular. The chain crosses the membrane as a helical span at residues Val344–Phe364. At Val365–Arg382 the chain is on the cytoplasmic side. Residues Ile383–Asp403 traverse the membrane as a helical segment. Topologically, residues Tyr404–Asn412 are extracellular.

Belongs to the SLC29A/ENT transporter (TC 2.A.57) family.

The protein resides in the cell membrane. It carries out the reaction inosine(in) = inosine(out). The catalysed reaction is adenosine(in) = adenosine(out). It catalyses the reaction hypoxanthine(out) = hypoxanthine(in). The enzyme catalyses guanosine(in) = guanosine(out). It carries out the reaction guanine(out) = guanine(in). The catalysed reaction is thymidine(in) = thymidine(out). It catalyses the reaction uridine(out) = uridine(in). The enzyme catalyses uracil(in) = uracil(out). It carries out the reaction thymine(out) = thymine(in). The catalysed reaction is adenine(out) = adenine(in). It catalyses the reaction cytosine(out) = cytosine(in). The enzyme catalyses xanthine(out) = xanthine(in). Nucleoside and nucleobase transporter with a broad substrate specificity. The protein is Nucleoside transporter 1 of Plasmodium berghei (strain Anka).